The following is a 698-amino-acid chain: Ubiquitin-like modifier-activating enzyme ATG7 (698 aa).

Residues 11–13 carry the FAP motif motif; the sequence is FAP. Lysine 41 is covalently cross-linked (Glycyl lysine isopeptide (Lys-Gly) (interchain with G-Cter in ubiquitin)). The active-site Glycyl thioester intermediate is cysteine 567. Position 693 is a phosphoserine (serine 693).

The protein belongs to the ATG7 family. As to quaternary structure, homodimer. Interacts with ATG3; this interaction is essential for the transfer of ATG8-like proteins's thioester from ATG7 to ATG3 and plays a role in the conjugation of ATG12 to ATG5. Interacts with ATG12. Interacts with ATG10. Forms intermediate conjugates with GABARAPL1. Forms intermediate conjugates with ATG8-like proteins such as GABARAP, GABARAPL2 or MAP1LC3A. Interacts with EP300 acetyltransferase. Interacts with FOXO1. Post-translationally, acetylated by EP300. In terms of processing, polyubiquitinated on Lys-41 via 'Lys-63'-linked ubiquitin by TRIM32; this modification positiely regulates ATG8 and ATG12 activating enzyme activity leading to initiation of autophagy under metabolic stress. Widely expressed, especially in kidney, liver, lymph nodes and bone marrow.

Its subcellular location is the cytoplasm. It localises to the preautophagosomal structure. Functionally, E1-like activating enzyme involved in the 2 ubiquitin-like systems required for cytoplasm to vacuole transport (Cvt) and autophagy. Activates ATG12 for its conjugation with ATG5 as well as the ATG8 family proteins for their conjugation with phosphatidylethanolamine. Both systems are needed for the ATG8 association to Cvt vesicles and autophagosomes membranes. Facilitates LC3-I lipidation with phosphatidylethanolamine to form LC3-II which is found on autophagosomal membranes. Required for autophagic death induced by caspase-8 inhibition. Required for mitophagy which contributes to regulate mitochondrial quantity and quality by eliminating the mitochondria to a basal level to fulfill cellular energy requirements and preventing excess ROS production. Modulates p53/TP53 activity to regulate cell cycle and survival during metabolic stress. Also plays a key role in the maintenance of axonal homeostasis, the prevention of axonal degeneration, the maintenance of hematopoietic stem cells, the formation of Paneth cell granules, as well as in adipose differentiation. Plays a role in regulating the liver clock and glucose metabolism by mediating the autophagic degradation of CRY1 (clock repressor) in a time-dependent manner. The polypeptide is Ubiquitin-like modifier-activating enzyme ATG7 (Mus musculus (Mouse)).